Reading from the N-terminus, the 228-residue chain is Cytochrome c oxidase subunit 2 (228 aa).

Topologically, residues M1–H26 are mitochondrial intermembrane. Residues A27–L47 form a helical membrane-spanning segment. Topologically, residues N48–T60 are mitochondrial matrix. Residues V61–L81 form a helical membrane-spanning segment. Residues R82 to P228 are Mitochondrial intermembrane-facing. Cu cation contacts are provided by H161, C196, E198, C200, H204, and M207. E198 contributes to the Mg(2+) binding site.

The protein belongs to the cytochrome c oxidase subunit 2 family. Component of the cytochrome c oxidase (complex IV, CIV), a multisubunit enzyme composed of a catalytic core of 3 subunits and several supernumerary subunits. The complex exists as a monomer or a dimer and forms supercomplexes (SCs) in the inner mitochondrial membrane with ubiquinol-cytochrome c oxidoreductase (cytochrome b-c1 complex, complex III, CIII). Requires Cu cation as cofactor.

The protein resides in the mitochondrion inner membrane. It carries out the reaction 4 Fe(II)-[cytochrome c] + O2 + 8 H(+)(in) = 4 Fe(III)-[cytochrome c] + 2 H2O + 4 H(+)(out). In terms of biological role, component of the cytochrome c oxidase, the last enzyme in the mitochondrial electron transport chain which drives oxidative phosphorylation. The respiratory chain contains 3 multisubunit complexes succinate dehydrogenase (complex II, CII), ubiquinol-cytochrome c oxidoreductase (cytochrome b-c1 complex, complex III, CIII) and cytochrome c oxidase (complex IV, CIV), that cooperate to transfer electrons derived from NADH and succinate to molecular oxygen, creating an electrochemical gradient over the inner membrane that drives transmembrane transport and the ATP synthase. Cytochrome c oxidase is the component of the respiratory chain that catalyzes the reduction of oxygen to water. Electrons originating from reduced cytochrome c in the intermembrane space (IMS) are transferred via the dinuclear copper A center (CU(A)) of subunit 2 and heme A of subunit 1 to the active site in subunit 1, a binuclear center (BNC) formed by heme A3 and copper B (CU(B)). The BNC reduces molecular oxygen to 2 water molecules using 4 electrons from cytochrome c in the IMS and 4 protons from the mitochondrial matrix. The sequence is that of Cytochrome c oxidase subunit 2 (COII) from Lumbricus terrestris (Common earthworm).